The primary structure comprises 155 residues: E3 ubiquitin-protein ligase RHA2A (155 aa).

Residues 86-128 (CVVCLSKLKEGEEVRKLECRHVFHKKCLEGWLHQFNFTCPLCR) form an RING-type; atypical zinc finger.

Interacts with NAC019 and NAC055. Expressed in stems, flowers, cauline leaves, rosettes, siliques, seeds and roots.

Its subcellular location is the cytoplasm. It is found in the nucleus. The catalysed reaction is S-ubiquitinyl-[E2 ubiquitin-conjugating enzyme]-L-cysteine + [acceptor protein]-L-lysine = [E2 ubiquitin-conjugating enzyme]-L-cysteine + N(6)-ubiquitinyl-[acceptor protein]-L-lysine.. It participates in protein modification; protein ubiquitination. Functionally, E3 ubiquitin-protein ligase involved in the positive regulation of abscisic acid (ABA) signaling and responses to salt and osmotic stresses during seed germination and early seedling development. Acts additively with RHA2B in regulating ABA signaling and drought response. Possesses E3 ubiquitin ligase activity in vitro. The polypeptide is E3 ubiquitin-protein ligase RHA2A (Arabidopsis thaliana (Mouse-ear cress)).